An 87-amino-acid chain; its full sequence is Potassium channel toxin Tdi-beta-KTx (87 aa).

The N-terminal stretch at 1-19 is a signal peptide; that stretch reads MERKLALLLLLGMITLASS. Residues 20–27 constitute a propeptide that is removed on maturation; it reads GLREKHVQ. The 35-residue stretch at 53 to 87 folds into the BetaSPN-type CS-alpha/beta domain; sequence QFGCPAYEGYCMNHCQDIERHDGSCHGFKCKCEKS. Intrachain disulfides connect Cys-56/Cys-77, Cys-63/Cys-82, and Cys-67/Cys-84.

In terms of tissue distribution, expressed by the venom gland.

The protein localises to the secreted. In terms of biological role, inhibits voltage-gated potassium channel. This is Potassium channel toxin Tdi-beta-KTx from Tityus discrepans (Venezuelan scorpion).